Consider the following 117-residue polypeptide: Ig heavy chain V region MOPC 47A (117 aa).

Residues 1 to 113 form the Ig-like domain; sequence EVKLVESGGG…FAYWGZGTLV (113 aa).

This chain is Ig heavy chain V region MOPC 47A, found in Mus musculus (Mouse).